A 292-amino-acid polypeptide reads, in one-letter code: MSKSKRIILSVVIILAVGIGLFFFLREVFSGRLIVRDYIFQIGKFQLRWYSICIASGILVAYVLARRRLSMYPIKPEDLDEGLFWGIVAGILGARIYYVIFNWNYYSKYPSEIYKIWHGGLAIHGGIFGALLMIFIYSKIKGYFKFVHATDLFTSVLPLAQAIGRWGNFFNYEAYGRPTTLPWKMYVPPERRMPGFDIDRFFHPTFLYESLWDITIFVFLYFFVEKRKREYGETTALYLILYSLGRFWIESLRLDSLMAGHFRAAQVVSIILIFIGAAWYAYIIGKTGKRDN.

The next 4 membrane-spanning stretches (helical) occupy residues 7 to 27 (IILS…FLRE), 45 to 65 (FQLR…YVLA), 83 to 103 (LFWG…IFNW), and 116 to 136 (IWHG…MIFI). R165 is a binding site for a 1,2-diacyl-sn-glycero-3-phospho-(1'-sn-glycerol). Helical transmembrane passes span 204 to 224 (PTFL…YFFV) and 264 to 284 (AAQV…AYII).

It belongs to the Lgt family.

It localises to the cell inner membrane. It catalyses the reaction L-cysteinyl-[prolipoprotein] + a 1,2-diacyl-sn-glycero-3-phospho-(1'-sn-glycerol) = an S-1,2-diacyl-sn-glyceryl-L-cysteinyl-[prolipoprotein] + sn-glycerol 1-phosphate + H(+). It functions in the pathway protein modification; lipoprotein biosynthesis (diacylglyceryl transfer). Its function is as follows. Catalyzes the transfer of the diacylglyceryl group from phosphatidylglycerol to the sulfhydryl group of the N-terminal cysteine of a prolipoprotein, the first step in the formation of mature lipoproteins. In Fervidobacterium nodosum (strain ATCC 35602 / DSM 5306 / Rt17-B1), this protein is Phosphatidylglycerol--prolipoprotein diacylglyceryl transferase.